Reading from the N-terminus, the 542-residue chain is Cytochrome P450 79B1 (542 aa).

The chain crosses the membrane as a helical span at residues 21–41; the sequence is FSNMYLLTTLQAFVAITLVML. Cysteine 478 contacts heme.

Belongs to the cytochrome P450 family. The cofactor is heme.

The protein resides in the membrane. Converts tyrosine to para-hydrophenylacetaldoxime in para-hydroxybenzylglucosinolate biosynthesis. The polypeptide is Cytochrome P450 79B1 (CYP79B1) (Sinapis alba (White mustard)).